Reading from the N-terminus, the 515-residue chain is Nectin-1 (515 aa).

Residues 1-30 (MARMGLAGAAGRWWGLALGLTAFFLPGTHT) form the signal peptide. One can recognise an Ig-like V-type domain in the interval 31–141 (QVVQVNDSMY…GNRESQLNLT (111 aa)). At 31–354 (QVVQVNDSMY…GRRAGQMPTA (324 aa)) the chain is on the extracellular side. 7 N-linked (GlcNAc...) asparagine glycosylation sites follow: Asn36, Asn72, Asn139, Asn202, Asn286, Asn297, and Asn332. Cys51 and Cys124 form a disulfide bridge. 2 Ig-like C2-type domains span residues 145 to 243 (KPTN…TLNV) and 247 to 334 (PEVT…VNIT). 2 cysteine pairs are disulfide-bonded: Cys172–Cys226 and Cys269–Cys316. Residues 282-299 (WTTLNGSLPKGVEAQNRT) are interaction with FGFR. A helical membrane pass occupies residues 355-375 (IIGGVAGSVLLVLIVVGGIIV). The Cytoplasmic portion of the chain corresponds to 376 to 515 (ALRRRRHTFK…SFISKKEWYV (140 aa)). Residues 399–486 (YSKAGIPQHH…DGYGDRTLGY (88 aa)) are disordered. 3 positions are modified to phosphoserine: Ser421, Ser433, and Ser434. At Tyr435 the chain carries Phosphotyrosine. The span at 447-464 (GERKVGGPHPKYDEDAKR) shows a compositional bias: basic and acidic residues. At Ser509 the chain carries Phosphoserine.

This sequence belongs to the nectin family. Cis- and trans-homodimer. Can form trans-heterodimers with NECTIN3 and with NECTIN4. Interaction between NECTIN1 and NECTIN3 on the pre- and postsynaptic sites, respectively, initiates the formation of puncta adherentia junctions between axons and dendrites. Interacts (via cytoplasmic domain) with AFDN (via PDZ domain); this interaction recruits NECTIN1 to cadherin-based adherens junctions and provides a connection with the actin cytoskeleton. Interacts with integrin alphaV/beta3. Interacts (via Ig-like C2-type domain 2) with FGFR1, FGFR2 and FGFR3. As to quaternary structure, (Microbial infection) Interacts with herpes pseudorabies virus/PRV envelope glycoprotein D.

The protein resides in the cell membrane. The protein localises to the cell junction. It is found in the adherens junction. Its subcellular location is the presynaptic cell membrane. In terms of biological role, cell adhesion molecule that promotes cell-cell contacts and plays important roles in the development of the nervous system. Acts by forming homophilic or heterophilic trans-dimers. Heterophilic interactions have been detected between NECTIN1 and NECTIN3 and between NECTIN1 and NECTIN4. Involved in axon guidance by promoting contacts between the commissural axons and the floor plate cells. Involved in synaptogegesis. Has some neurite outgrowth-promoting activity. Promotes formation of checkerboard-like cellular pattern of hair cells and supporting cells in the auditory epithelium via heterophilic interaction with NECTIN3: NECTIN1 is present in the membrane of hair cells and associates with NECTIN3 on supporting cells, thereby mediating heterotypic adhesion between these two cell types. Required for enamel mineralization. Functionally, (Microbial infection) Acts as a receptor for pseudorabies virus/PRV. The polypeptide is Nectin-1 (Mus musculus (Mouse)).